The primary structure comprises 280 residues: uncharacterized protein (280 aa).

This sequence to E.coli YgfZ (UP14) and B.aphidicola (subsp. Acyrthosiphon pisum) BU435.

This is an uncharacterized protein from Haemophilus influenzae (strain ATCC 51907 / DSM 11121 / KW20 / Rd).